The primary structure comprises 336 residues: Holliday junction branch migration complex subunit RuvB (336 aa).

A large ATPase domain (RuvB-L) region spans residues 1 to 181 (MDRIVEIEKV…FGMDFRLQFY (181 aa)). ATP contacts are provided by residues leucine 20, arginine 21, glycine 62, lysine 65, threonine 66, threonine 67, 128-130 (EDF), arginine 171, tyrosine 181, and arginine 218. Position 66 (threonine 66) interacts with Mg(2+). The small ATPAse domain (RuvB-S) stretch occupies residues 182-252 (TSSELSRIVQ…RAKEGLNALG (71 aa)). Positions 255–336 (SLGFDEMDIR…KIDIEKGLFE (82 aa)) are head domain (RuvB-H). DNA is bound by residues arginine 309 and arginine 314.

This sequence belongs to the RuvB family. Homohexamer. Forms an RuvA(8)-RuvB(12)-Holliday junction (HJ) complex. HJ DNA is sandwiched between 2 RuvA tetramers; dsDNA enters through RuvA and exits via RuvB. An RuvB hexamer assembles on each DNA strand where it exits the tetramer. Each RuvB hexamer is contacted by two RuvA subunits (via domain III) on 2 adjacent RuvB subunits; this complex drives branch migration. In the full resolvosome a probable DNA-RuvA(4)-RuvB(12)-RuvC(2) complex forms which resolves the HJ.

The protein resides in the cytoplasm. It carries out the reaction ATP + H2O = ADP + phosphate + H(+). Its function is as follows. The RuvA-RuvB-RuvC complex processes Holliday junction (HJ) DNA during genetic recombination and DNA repair, while the RuvA-RuvB complex plays an important role in the rescue of blocked DNA replication forks via replication fork reversal (RFR). RuvA specifically binds to HJ cruciform DNA, conferring on it an open structure. The RuvB hexamer acts as an ATP-dependent pump, pulling dsDNA into and through the RuvAB complex. RuvB forms 2 homohexamers on either side of HJ DNA bound by 1 or 2 RuvA tetramers; 4 subunits per hexamer contact DNA at a time. Coordinated motions by a converter formed by DNA-disengaged RuvB subunits stimulates ATP hydrolysis and nucleotide exchange. Immobilization of the converter enables RuvB to convert the ATP-contained energy into a lever motion, pulling 2 nucleotides of DNA out of the RuvA tetramer per ATP hydrolyzed, thus driving DNA branch migration. The RuvB motors rotate together with the DNA substrate, which together with the progressing nucleotide cycle form the mechanistic basis for DNA recombination by continuous HJ branch migration. Branch migration allows RuvC to scan DNA until it finds its consensus sequence, where it cleaves and resolves cruciform DNA. This Campylobacter concisus (strain 13826) protein is Holliday junction branch migration complex subunit RuvB.